The chain runs to 272 residues: Formamidopyrimidine-DNA glycosylase (272 aa).

Proline 2 acts as the Schiff-base intermediate with DNA in catalysis. The active-site Proton donor is glutamate 3. The Proton donor; for beta-elimination activity role is filled by lysine 58. 3 residues coordinate DNA: histidine 92, arginine 111, and arginine 153. The FPG-type zinc finger occupies 238–272 (AVYGRQGQSCPRCGGLVERCRLGQRSTFFCPACQR). Catalysis depends on arginine 262, which acts as the Proton donor; for delta-elimination activity.

The protein belongs to the FPG family. In terms of assembly, monomer. The cofactor is Zn(2+).

It catalyses the reaction Hydrolysis of DNA containing ring-opened 7-methylguanine residues, releasing 2,6-diamino-4-hydroxy-5-(N-methyl)formamidopyrimidine.. The enzyme catalyses 2'-deoxyribonucleotide-(2'-deoxyribose 5'-phosphate)-2'-deoxyribonucleotide-DNA = a 3'-end 2'-deoxyribonucleotide-(2,3-dehydro-2,3-deoxyribose 5'-phosphate)-DNA + a 5'-end 5'-phospho-2'-deoxyribonucleoside-DNA + H(+). Functionally, involved in base excision repair of DNA damaged by oxidation or by mutagenic agents. Acts as a DNA glycosylase that recognizes and removes damaged bases. Has a preference for oxidized purines, such as 7,8-dihydro-8-oxoguanine (8-oxoG). Has AP (apurinic/apyrimidinic) lyase activity and introduces nicks in the DNA strand. Cleaves the DNA backbone by beta-delta elimination to generate a single-strand break at the site of the removed base with both 3'- and 5'-phosphates. This chain is Formamidopyrimidine-DNA glycosylase, found in Laribacter hongkongensis (strain HLHK9).